Consider the following 430-residue polypeptide: MTEIDPNINEQEMAEVINSDKDIDSDSNTVGLTLFAQLQNQLRLQQEELLQQQRELLSQESHLQLLQSSHSSISNTWNFTQGLVVGQLSVIFLIIIFVKFFVFADSSSSIPSKFVARDGAGVIVRRDNKSTTSRDRHNGIGGKDSNLEPSTDDERLQNNRAKVSSILEKTYYDVNNHASESLDWFNVLIAQTISHLRTEALLSDNIYHSLSNFLDNSELPDFLDKINLTEIDVGDDFPIFSNCRIKHSKEDTGRLEAKIDVDLSDTLTLGMETKLLLNYPRPLTAILPVAMTVSIVRFSGCLTVSLVNTNDQEFQADQVARPSNGHTSTDNGNDENGKGSSSEDKKGGTALMFSFAPDYRLEFVVKSLIGSRAKLQDVPKISSLIENRLRTWFIERCVEPRFQVVKLPSLWPRTKNTREPAKPKDSDDTL.

The Lumenal segment spans residues 1–82 (MTEIDPNINE…ISNTWNFTQG (82 aa)). A helical transmembrane segment spans residues 83-103 (LVVGQLSVIFLIIIFVKFFVF). The Cytoplasmic segment spans residues 104 to 430 (ADSSSSIPSK…AKPKDSDDTL (327 aa)). 2 stretches are compositionally biased toward basic and acidic residues: residues 126 to 138 (RDNK…DRHN) and 335 to 346 (ENGKGSSSEDKK). Disordered regions lie at residues 126-154 (RDNK…TDDE) and 315-346 (QADQ…EDKK). The SMP-LTD domain occupies 178 to 408 (ASESLDWFNV…EPRFQVVKLP (231 aa)).

The protein belongs to the MMM1 family. As to quaternary structure, homodimer. Component of the ER-mitochondria encounter structure (ERMES) or MDM complex, composed of MMM1, MDM10, MDM12 and MDM34. An MMM1 homodimer associates with one molecule of MDM12 on each side in a pairwise head-to-tail manner, and the SMP-LTD domains of MMM1 and MDM12 generate a continuous hydrophobic tunnel for phospholipid trafficking.

Its subcellular location is the endoplasmic reticulum membrane. Functionally, component of the ERMES/MDM complex, which serves as a molecular tether to connect the endoplasmic reticulum (ER) and mitochondria. Components of this complex are involved in the control of mitochondrial shape and protein biogenesis, and function in nonvesicular lipid trafficking between the ER and mitochondria. The MDM12-MMM1 subcomplex functions in the major beta-barrel assembly pathway that is responsible for biogenesis of all outer membrane beta-barrel proteins, and acts in a late step after the SAM complex. The MDM10-MDM12-MMM1 subcomplex further acts in the TOM40-specific pathway after the action of the MDM12-MMM1 complex. Essential for establishing and maintaining the structure of mitochondria and maintenance of mtDNA nucleoids. This chain is Maintenance of mitochondrial morphology protein 1, found in Lodderomyces elongisporus (strain ATCC 11503 / CBS 2605 / JCM 1781 / NBRC 1676 / NRRL YB-4239) (Yeast).